The following is a 288-amino-acid chain: Acetyl-coenzyme A carboxylase carboxyl transferase subunit beta (288 aa).

Residues 30–288 (IMTKCPKCKK…KMHQEVKTNA (259 aa)) form the CoA carboxyltransferase N-terminal domain. Zn(2+)-binding residues include Cys34, Cys37, Cys53, and Cys56. The C4-type zinc finger occupies 34–56 (CPKCKKIMYTKELAENLNVCFNC).

It belongs to the AccD/PCCB family. In terms of assembly, acetyl-CoA carboxylase is a heterohexamer composed of biotin carboxyl carrier protein (AccB), biotin carboxylase (AccC) and two subunits each of ACCase subunit alpha (AccA) and ACCase subunit beta (AccD). The cofactor is Zn(2+).

The protein resides in the cytoplasm. The catalysed reaction is N(6)-carboxybiotinyl-L-lysyl-[protein] + acetyl-CoA = N(6)-biotinyl-L-lysyl-[protein] + malonyl-CoA. The protein operates within lipid metabolism; malonyl-CoA biosynthesis; malonyl-CoA from acetyl-CoA: step 1/1. Component of the acetyl coenzyme A carboxylase (ACC) complex. Biotin carboxylase (BC) catalyzes the carboxylation of biotin on its carrier protein (BCCP) and then the CO(2) group is transferred by the transcarboxylase to acetyl-CoA to form malonyl-CoA. The sequence is that of Acetyl-coenzyme A carboxylase carboxyl transferase subunit beta from Staphylococcus saprophyticus subsp. saprophyticus (strain ATCC 15305 / DSM 20229 / NCIMB 8711 / NCTC 7292 / S-41).